The sequence spans 285 residues: Bifunctional protein FolD (285 aa).

Residues 165-167 (GRS) and serine 190 contribute to the NADP(+) site.

This sequence belongs to the tetrahydrofolate dehydrogenase/cyclohydrolase family. Homodimer.

It catalyses the reaction (6R)-5,10-methylene-5,6,7,8-tetrahydrofolate + NADP(+) = (6R)-5,10-methenyltetrahydrofolate + NADPH. The enzyme catalyses (6R)-5,10-methenyltetrahydrofolate + H2O = (6R)-10-formyltetrahydrofolate + H(+). It functions in the pathway one-carbon metabolism; tetrahydrofolate interconversion. In terms of biological role, catalyzes the oxidation of 5,10-methylenetetrahydrofolate to 5,10-methenyltetrahydrofolate and then the hydrolysis of 5,10-methenyltetrahydrofolate to 10-formyltetrahydrofolate. This Burkholderia pseudomallei (strain 1106a) protein is Bifunctional protein FolD.